Reading from the N-terminus, the 158-residue chain is Large ribosomal subunit protein uL30 (158 aa).

This sequence belongs to the universal ribosomal protein uL30 family. In terms of assembly, part of the 50S ribosomal subunit.

This chain is Large ribosomal subunit protein uL30, found in Saccharolobus islandicus (strain Y.N.15.51 / Yellowstone #2) (Sulfolobus islandicus).